The chain runs to 264 residues: Acyl-[acyl-carrier-protein]--UDP-N-acetylglucosamine O-acyltransferase (264 aa).

This sequence belongs to the transferase hexapeptide repeat family. LpxA subfamily. Homotrimer.

The protein localises to the cytoplasm. The enzyme catalyses a (3R)-hydroxyacyl-[ACP] + UDP-N-acetyl-alpha-D-glucosamine = a UDP-3-O-[(3R)-3-hydroxyacyl]-N-acetyl-alpha-D-glucosamine + holo-[ACP]. The protein operates within glycolipid biosynthesis; lipid IV(A) biosynthesis; lipid IV(A) from (3R)-3-hydroxytetradecanoyl-[acyl-carrier-protein] and UDP-N-acetyl-alpha-D-glucosamine: step 1/6. In terms of biological role, involved in the biosynthesis of lipid A, a phosphorylated glycolipid that anchors the lipopolysaccharide to the outer membrane of the cell. The protein is Acyl-[acyl-carrier-protein]--UDP-N-acetylglucosamine O-acyltransferase of Haemophilus ducreyi (strain 35000HP / ATCC 700724).